Here is a 236-residue protein sequence, read N- to C-terminus: Small ribosomal subunit protein uS5 (236 aa).

Residues 61-124 (ENQEVLDIAL…NYAKLNIIEI (64 aa)) enclose the S5 DRBM domain.

This sequence belongs to the universal ribosomal protein uS5 family. As to quaternary structure, part of the 30S ribosomal subunit. Contacts protein S4.

Functionally, with S4 and S12 plays an important role in translational accuracy. This is Small ribosomal subunit protein uS5 from Pyrococcus furiosus (strain ATCC 43587 / DSM 3638 / JCM 8422 / Vc1).